Here is a 378-residue protein sequence, read N- to C-terminus: Carbamoyl phosphate synthase small chain (378 aa).

The segment at 1-188 (MLPSFPPAIL…LGRGYGVQDK (188 aa)) is CPSase. The L-glutamine site is built by serine 50, glycine 240, and glycine 242. The region spanning 192–378 (HVVAYDFGVK…FTAAMAERKQ (187 aa)) is the Glutamine amidotransferase type-1 domain. Residue cysteine 268 is the Nucleophile of the active site. L-glutamine-binding residues include leucine 269, glutamine 272, asparagine 310, glycine 312, and phenylalanine 313. Active-site residues include histidine 352 and glutamate 354.

This sequence belongs to the CarA family. As to quaternary structure, composed of two chains; the small (or glutamine) chain promotes the hydrolysis of glutamine to ammonia, which is used by the large (or ammonia) chain to synthesize carbamoyl phosphate. Tetramer of heterodimers (alpha,beta)4.

The catalysed reaction is hydrogencarbonate + L-glutamine + 2 ATP + H2O = carbamoyl phosphate + L-glutamate + 2 ADP + phosphate + 2 H(+). It carries out the reaction L-glutamine + H2O = L-glutamate + NH4(+). Its pathway is amino-acid biosynthesis; L-arginine biosynthesis; carbamoyl phosphate from bicarbonate: step 1/1. The protein operates within pyrimidine metabolism; UMP biosynthesis via de novo pathway; (S)-dihydroorotate from bicarbonate: step 1/3. Small subunit of the glutamine-dependent carbamoyl phosphate synthetase (CPSase). CPSase catalyzes the formation of carbamoyl phosphate from the ammonia moiety of glutamine, carbonate, and phosphate donated by ATP, constituting the first step of 2 biosynthetic pathways, one leading to arginine and/or urea and the other to pyrimidine nucleotides. The small subunit (glutamine amidotransferase) binds and cleaves glutamine to supply the large subunit with the substrate ammonia. In Ralstonia nicotianae (strain ATCC BAA-1114 / GMI1000) (Ralstonia solanacearum), this protein is Carbamoyl phosphate synthase small chain.